Reading from the N-terminus, the 982-residue chain is Little elongation complex subunit 2 (982 aa).

Phosphoserine occurs at positions 17 and 326. Over residues Thr-410–Asn-427 the composition is skewed to polar residues. 2 disordered regions span residues Thr-410–Ser-450 and Gly-473–Gln-504. Over residues Glu-479–Asn-497 the composition is skewed to basic and acidic residues. Phosphoserine is present on Ser-571. A Phosphothreonine modification is found at Thr-573. Disordered regions lie at residues Val-595–Cys-623, Glu-672–Trp-697, and Pro-930–Thr-982. The segment covering Ser-597–Ser-610 has biased composition (low complexity). Composition is skewed to polar residues over residues Gly-611 to Cys-623 and Glu-672 to Leu-683. A compositionally biased stretch (low complexity) spans Ser-684 to Trp-697. The segment covering Ser-956 to Glu-970 has biased composition (polar residues).

This sequence belongs to the ICE2 family. Component of the little elongation complex (LEC), at least composed of ELL (ELL, ELL2 or ELL3), ZC3H8, ICE1 and ICE2. Interacts with ICE1 (via C-terminus domain). Interacts with ELL. As to expression, expressed at low levels in lung and testis.

It is found in the nucleus. Component of the little elongation complex (LEC), a complex required to regulate small nuclear RNA (snRNA) gene transcription by RNA polymerase II and III. In Homo sapiens (Human), this protein is Little elongation complex subunit 2 (ICE2).